The following is a 607-amino-acid chain: WD repeat-containing protein 1 (607 aa).

WD repeat units follow at residues 4 to 45, 48 to 87, 93 to 135, 138 to 176, 180 to 218, 224 to 263, 270 to 306, 311 to 351, 358 to 408, 432 to 474, 480 to 518, 523 to 561, and 566 to 604; these read ELKK…IRNI, PAIA…IWDT, LLKY…LWDT, SVGE…FFEG, KFKF…LYDG, VGNL…IWDV, TTFH…YLDK, RPLR…YWDA, TFTG…KMDV, LKDK…LYSI, KDEG…VFNV, SEQN…VWTL, and ARIK…QWTV.

This sequence belongs to the WD repeat AIP1 family.

The protein resides in the cell membrane. It is found in the cytoplasm. Its subcellular location is the cytoskeleton. It localises to the nucleus. Functionally, induces disassembly of actin filaments in conjunction with ADF/cofilin family proteins. Doesn't sever actin filaments alone, but caps the barbed ends of filaments severed by cofilin, which blocks annealing and depolymerization and allows more extensive severing by cofilin. The polypeptide is WD repeat-containing protein 1 (Xenopus tropicalis (Western clawed frog)).